The chain runs to 281 residues: ATP synthase subunit a (281 aa).

6 helical membrane passes run 50–70 (FSFT…LLLV), 116–136 (FFPC…QGMI), 145–165 (HFLI…IVGF), 172–192 (FLSF…LVLL), 219–239 (VKIL…FYFI), and 246–266 (FIVL…AYVF).

Belongs to the ATPase A chain family. F-type ATPases have 2 components, CF(1) - the catalytic core - and CF(0) - the membrane proton channel. CF(1) has five subunits: alpha(3), beta(3), gamma(1), delta(1), epsilon(1). CF(0) has three main subunits: a, b and c.

The protein localises to the mitochondrion inner membrane. Mitochondrial membrane ATP synthase (F(1)F(0) ATP synthase or Complex V) produces ATP from ADP in the presence of a proton gradient across the membrane which is generated by electron transport complexes of the respiratory chain. F-type ATPases consist of two structural domains, F(1) - containing the extramembraneous catalytic core and F(0) - containing the membrane proton channel, linked together by a central stalk and a peripheral stalk. During catalysis, ATP synthesis in the catalytic domain of F(1) is coupled via a rotary mechanism of the central stalk subunits to proton translocation. Key component of the proton channel; it may play a direct role in the translocation of protons across the membrane. In Oenothera berteroana (Bertero's evening primrose), this protein is ATP synthase subunit a (ATP6).